The chain runs to 348 residues: Spermidine/putrescine import ATP-binding protein PotA (348 aa).

Positions 6–236 constitute an ABC transporter domain; sequence IRLVNVTKEY…PKNVFVADFI (231 aa). ATP is bound at residue 38–45; that stretch reads GPSGCGKT.

It belongs to the ABC transporter superfamily. Spermidine/putrescine importer (TC 3.A.1.11.1) family. The complex is composed of two ATP-binding proteins (PotA), two transmembrane proteins (PotB and PotC) and a solute-binding protein (PotD).

The protein localises to the cell membrane. The catalysed reaction is ATP + H2O + polyamine-[polyamine-binding protein]Side 1 = ADP + phosphate + polyamineSide 2 + [polyamine-binding protein]Side 1.. Functionally, part of the ABC transporter complex PotABCD involved in spermidine/putrescine import. Responsible for energy coupling to the transport system. The sequence is that of Spermidine/putrescine import ATP-binding protein PotA from Desulfitobacterium hafniense (strain Y51).